The sequence spans 518 residues: Forkhead box protein H1 (518 aa).

The interval 72-113 (GSMYGLSPGTHEGSCTHTHEGPKDSMAGDQTRSRKSKKKNYH) is disordered. Residues 104–113 (SRKSKKKNYH) show a composition bias toward basic residues. The segment at residues 117–213 (KPPYSYLAMI…MKLQNTALTR (97 aa)) is a DNA-binding region (fork-head). The tract at residues 318–397 (KPTRNARSPG…NYSPIEPPKK (80 aa)) is disordered. Positions 329-346 (STIHSTYSSSSSSISTIS) are enriched in low complexity. An SMAD-interaction domain (SID) region spans residues 380–506 (TSSDPDTGNY…PSFLSQCLGS (127 aa)). Positions 405-409 (LPTSY) match the Fast/FoxH1 motif 1 (FM1) motif. A Fast/FoxH1 motif 2 (FM2) motif is present at residues 415–421 (PNVVAPP). Positions 470-491 (LDNMLRAMPPNKSVFDVLTSHP) match the SMAD interaction motif (SIM) motif.

In terms of assembly, ARF1 contains 2 smad2s, 1 smad4 and 1 foxh1/fast-1 protein. Interaction with smad4 is most likely indirect through interaction with the MH2 domain of smad2. Binds to the MH2 domain of smad3, which can incorporate into the ARF1 complex. The ARF1 and ARF2 complexes are activated by distinct TGF-beta family members; formation of ARF1 is promoted by activin. Interacts (via Fork-head domain) with gtf2ird1/wbscr11 (via repeats 4-5). Highly expressed in the animal cap (prospective ectoderm) and prospective mesoderm of stage 10.25 embryos.

The protein localises to the nucleus. In terms of biological role, transcriptional activator. Recognizes and binds to the DNA sequence 5'-TGT[GT][GT]ATT-3'. Upon TGF-beta induction, forms a transcriptionally active complex with smad2 and smad4 called activin-responsive factor 1 (ARF1), which binds a site on the mix-B/mix.2 promoter called the activin response element (ARE). Binds to activated smads and the ARE with much lower affinity than fast3. Necessary for the first steps in mesoderm specification, directly inducing mesodermal genes. Acts with fast3 to control the convergent extension movements of gastrulation. Binds to the proximal element (PE) of the gsc gene and cooperates with gtf2ird1/wbscr11 and SMAD proteins to regulate gsc transcription. The protein is Forkhead box protein H1 (foxh1) of Xenopus laevis (African clawed frog).